The sequence spans 842 residues: Type VI secretion system spike protein VgrG2a (842 aa).

The interval 265-291 (RSGAGRPFSESRLRGHRRDARVASVSG) is disordered.

This sequence belongs to the VgrG protein family.

Part of the H2 type VI secretion system (H2-T6SS) specialized secretion system, which delivers several virulence factors in both prokaryotic and eukaryotic cells during infection. May form the spike at the tip of the elongating tube formed by haemolysin co-regulated protein 2a/Hcp2a. In turn, may allow the delivery of the Tle4 antibacterial toxin to target cells where it exerts its toxicity. Also promotes the release of VgrG2b toxin to the host cell. The protein is Type VI secretion system spike protein VgrG2a of Pseudomonas aeruginosa (strain ATCC 15692 / DSM 22644 / CIP 104116 / JCM 14847 / LMG 12228 / 1C / PRS 101 / PAO1).